The chain runs to 82 residues: Penaeidin-3f (82 aa).

The signal sequence occupies residues 1–19; the sequence is MRLVACLVFLASFALVCQG. Position 20 is a pyrrolidone carboxylic acid (glutamine 20). Intrachain disulfides connect cysteine 51–cysteine 66, cysteine 55–cysteine 73, and cysteine 67–cysteine 74. Serine amide is present on serine 81.

The protein belongs to the penaeidin family.

It is found in the cytoplasmic granule. In terms of biological role, antibacterial and antifungal activity. Presents chitin-binding activity. The sequence is that of Penaeidin-3f from Penaeus vannamei (Whiteleg shrimp).